Reading from the N-terminus, the 156-residue chain is Cyanate hydratase (156 aa).

Active-site residues include R96, E99, and S122.

Belongs to the cyanase family.

The catalysed reaction is cyanate + hydrogencarbonate + 3 H(+) = NH4(+) + 2 CO2. In terms of biological role, catalyzes the reaction of cyanate with bicarbonate to produce ammonia and carbon dioxide. In Burkholderia cenocepacia (strain ATCC BAA-245 / DSM 16553 / LMG 16656 / NCTC 13227 / J2315 / CF5610) (Burkholderia cepacia (strain J2315)), this protein is Cyanate hydratase.